The chain runs to 78 residues: NAD(P)H-quinone oxidoreductase subunit L (78 aa).

Helical transmembrane passes span 10–30 and 47–67; these read IILI…PAIV and VFMY…SPFL.

This sequence belongs to the complex I NdhL subunit family. NDH-1 can be composed of about 15 different subunits; different subcomplexes with different compositions have been identified which probably have different functions.

It localises to the cellular thylakoid membrane. It carries out the reaction a plastoquinone + NADH + (n+1) H(+)(in) = a plastoquinol + NAD(+) + n H(+)(out). The enzyme catalyses a plastoquinone + NADPH + (n+1) H(+)(in) = a plastoquinol + NADP(+) + n H(+)(out). Its function is as follows. NDH-1 shuttles electrons from an unknown electron donor, via FMN and iron-sulfur (Fe-S) centers, to quinones in the respiratory and/or the photosynthetic chain. The immediate electron acceptor for the enzyme in this species is believed to be plastoquinone. Couples the redox reaction to proton translocation, and thus conserves the redox energy in a proton gradient. Cyanobacterial NDH-1 also plays a role in inorganic carbon-concentration. The polypeptide is NAD(P)H-quinone oxidoreductase subunit L (Trichodesmium erythraeum (strain IMS101)).